Consider the following 993-residue polypeptide: Signal peptide, CUB and EGF-like domain-containing protein 3 (993 aa).

The first 20 residues, 1-20 (MGSGRVPGLCLLLLLVHARA), serve as a signal peptide directing secretion. Positions 29 to 69 (DVDECVEGTDNCHIDAICQNTPRSYKCICKSGYTGDGKHCK) constitute an EGF-like 1; calcium-binding domain. Intrachain disulfides connect C33–C46, C40–C55, C57–C68, C74–C86, C82–C95, C97–C110, C116–C127, C123–C136, C161–C172, C168–C182, C184–C197, C201–C212, C208–C221, C223–C236, C240–C251, C247–C260, C262–C275, C281–C292, C288–C301, C303–C316, C322–C332, C328–C341, C343–C355, C361–C372, C368–C381, and C383–C397. In terms of domain architecture, EGF-like 2; calcium-binding spans 70–111 (DVDECEREDNAGCVHDCVNIPGNYRCTCYDGFHLAHDGHNCL). Residues 112–148 (DVDECAEGNGGCQQSCVNMMGSYECHCRDGFFLSDNQ) form the EGF-like 3; calcium-binding domain. EGF-like domains are found at residues 157 to 198 (EGMN…RDCK), 199 to 237 (LTCNYGNGGCQHTCDDTEQGPRCGCHVKFVLHTDGKTCI), and 238 to 276 (ETCAVNNGGCDSKCHDAATGVHCSCPVGFMLQPDRKTCK). Residues 277-317 (DIDECRLNNGGCDHICRNTVGSFECSCKKGYKLLINERSCQ) enclose the EGF-like 7; calcium-binding domain. The EGF-like 8; calcium-binding domain occupies 318 to 356 (DIDECSFDRTCDHMCVNTPGSFQCLCHRGYLLYGVTHCG). In terms of domain architecture, EGF-like 9; calcium-binding spans 357 to 398 (DVDECSINKGGCRFGCINTPGSYQCTCPAGQGRLHWNGKDCT). Residues N417, N464, N685, N756, and N785 are each glycosylated (N-linked (GlcNAc...) asparagine). Intrachain disulfides connect C804–C830 and C857–C878. Residues 804–916 (CGGELGEFTG…RGFQIPYVTY (113 aa)) form the CUB domain.

In terms of assembly, forms homooligomers. Forms heterooligomers with SCUBE1 and SCUBE2. Interacts with TGFBR2 through the CUB domain; this interaction does not affect TGFB1-binding to TGFBR2. Interacts with BMP2, BMP4 and BMP7; the interaction is mediated by the CUB domain. Interacts with BMPR1A, BMPR1B and BMPR2; the interaction with BMPR1A and BMPR1B is BMP2- and BMP4-dependent. In terms of processing, N-glycosylated. Proteolytic cleavage produces a CUB-containing C-terminal fragment that retains the ability to bind to TGFBR2. This reaction is catalyzed in vitro by MMP2 and, to a lesser extent, by MMP9. As to expression, highly expressed in femur and humerus with little or no expression in non-bone tissues.

It localises to the secreted. Its subcellular location is the cell surface. Functionally, is a positive regulator of the BMP signaling pathway, required for proper chondrogenesis, osteogenesis and skeletal development. It acts as a coreceptor for BMP ligands, particularly BMP2 and BMP4, facilitating their interactions with BMP type I receptors. It is required for ligand-induced recruitment of BMP receptors to lipid rafts. Binds to TGFBR2 and activates TGFB signaling. The chain is Signal peptide, CUB and EGF-like domain-containing protein 3 from Mus musculus (Mouse).